A 432-amino-acid polypeptide reads, in one-letter code: Adenylosuccinate synthetase (432 aa).

GTP contacts are provided by residues 12-18 and 40-42; these read GDEGKGK and GHT. The Proton acceptor role is filled by Asp-13. 2 residues coordinate Mg(2+): Asp-13 and Gly-40. IMP contacts are provided by residues 13 to 16, 38 to 41, Thr-129, Arg-143, Gln-224, Thr-239, and Arg-303; these read DEGK and NAGH. His-41 acts as the Proton donor in catalysis. A substrate-binding site is contributed by 299-305; it reads VTTGRRR. Residues Arg-305, 331-333, and 413-415 contribute to the GTP site; these read KLD and GVG.

This sequence belongs to the adenylosuccinate synthetase family. As to quaternary structure, homodimer. Mg(2+) is required as a cofactor.

It is found in the cytoplasm. The catalysed reaction is IMP + L-aspartate + GTP = N(6)-(1,2-dicarboxyethyl)-AMP + GDP + phosphate + 2 H(+). It functions in the pathway purine metabolism; AMP biosynthesis via de novo pathway; AMP from IMP: step 1/2. In terms of biological role, plays an important role in the de novo pathway of purine nucleotide biosynthesis. Catalyzes the first committed step in the biosynthesis of AMP from IMP. In Mycobacterium tuberculosis (strain CDC 1551 / Oshkosh), this protein is Adenylosuccinate synthetase.